A 174-amino-acid chain; its full sequence is Alkyl hydroperoxide reductase AhpD (174 aa).

Cys-130 functions as the Proton donor in the catalytic mechanism. Cys-130 and Cys-133 are oxidised to a cystine. Residue Cys-133 is the Cysteine sulfenic acid (-SOH) intermediate of the active site.

The protein belongs to the AhpD family. As to quaternary structure, homotrimer.

It carries out the reaction N(6)-[(R)-dihydrolipoyl]-L-lysyl-[lipoyl-carrier protein] + a hydroperoxide = N(6)-[(R)-lipoyl]-L-lysyl-[lipoyl-carrier protein] + an alcohol + H2O. Its function is as follows. Antioxidant protein with alkyl hydroperoxidase activity. Required for the reduction of the AhpC active site cysteine residues and for the regeneration of the AhpC enzyme activity. This Corynebacterium kroppenstedtii (strain DSM 44385 / JCM 11950 / CIP 105744 / CCUG 35717) protein is Alkyl hydroperoxide reductase AhpD.